A 677-amino-acid chain; its full sequence is AP-2 complex subunit beta (677 aa).

A disordered region spans residues 597–677; it reads RLRTRDSNPS…PMTPETHLMD (81 aa). Residues 616–627 are compositionally biased toward basic residues; that stretch reads KKYNHFHQKSQT. Over residues 636–654 the composition is skewed to polar residues; the sequence is RNSWNPSPFSDESNSNTFS.

This sequence belongs to the adaptor complexes large subunit family. In terms of assembly, adaptor protein complex 2 (AP-2) is a heterotetramer composed of two large adaptins (alpha-type subunit apl3 and beta-type subunit apl1), a medium chain (mu-type subunit apm4) and a small adaptin (sigma-type subunit aps2).

It is found in the cell membrane. The protein localises to the membrane. It localises to the coated pit. Its function is as follows. Adaptins are components of the adaptor complexes which link clathrin to receptors in coated vesicles. Clathrin-associated protein complexes are believed to interact with the cytoplasmic tails of membrane proteins, leading to their selection and concentration. Beta adaptin is a subunit of the plasma membrane adaptor. This chain is AP-2 complex subunit beta (apl1), found in Schizosaccharomyces pombe (strain 972 / ATCC 24843) (Fission yeast).